Here is a 200-residue protein sequence, read N- to C-terminus: Adenylate kinase (200 aa).

Position 10 to 15 (10 to 15 (GAGKGT)) interacts with ATP. The tract at residues 30–59 (STGDMLRAAVAAGTPVGLEAKAVMESGGLV) is NMP. AMP is bound by residues Thr-31, Arg-36, 57–59 (GLV), 85–88 (GFPR), and Gln-92. Residues 126–142 (KRAAETLARGQAVRKDD) form an LID region. Arg-127 contributes to the ATP binding site. Arg-139 and Arg-150 together coordinate AMP. Residue Gln-178 coordinates ATP.

This sequence belongs to the adenylate kinase family. As to quaternary structure, monomer.

It is found in the cytoplasm. It carries out the reaction AMP + ATP = 2 ADP. The protein operates within purine metabolism; AMP biosynthesis via salvage pathway; AMP from ADP: step 1/1. Its function is as follows. Catalyzes the reversible transfer of the terminal phosphate group between ATP and AMP. Plays an important role in cellular energy homeostasis and in adenine nucleotide metabolism. This Methylobacterium radiotolerans (strain ATCC 27329 / DSM 1819 / JCM 2831 / NBRC 15690 / NCIMB 10815 / 0-1) protein is Adenylate kinase.